The sequence spans 179 residues: UPF0227 protein Shew185_2404 (179 aa).

This sequence belongs to the UPF0227 family.

The protein is UPF0227 protein Shew185_2404 of Shewanella baltica (strain OS185).